Reading from the N-terminus, the 508-residue chain is Histidine ammonia-lyase (508 aa).

Residues 143-145 constitute a cross-link (5-imidazolinone (Ala-Gly)); sequence ASG. Residue serine 144 is modified to 2,3-didehydroalanine (Ser).

Belongs to the PAL/histidase family. In terms of processing, contains an active site 4-methylidene-imidazol-5-one (MIO), which is formed autocatalytically by cyclization and dehydration of residues Ala-Ser-Gly.

The protein resides in the cytoplasm. The enzyme catalyses L-histidine = trans-urocanate + NH4(+). The protein operates within amino-acid degradation; L-histidine degradation into L-glutamate; N-formimidoyl-L-glutamate from L-histidine: step 1/3. This Anaeromyxobacter dehalogenans (strain 2CP-C) protein is Histidine ammonia-lyase.